Reading from the N-terminus, the 554-residue chain is Glutamine--tRNA ligase (554 aa).

The 'HIGH' region motif lies at proline 34–histidine 44. Residues glutamate 35 to asparagine 37 and histidine 41 to serine 47 each bind ATP. Positions 67 and 212 each coordinate L-glutamine. ATP is bound by residues threonine 231, arginine 261–leucine 262, and methionine 269–lysine 271. Positions valine 268–arginine 272 match the 'KMSKS' region motif. The interval threonine 317–glutamate 324 is interaction with tRNA.

It belongs to the class-I aminoacyl-tRNA synthetase family. Monomer.

The protein localises to the cytoplasm. It carries out the reaction tRNA(Gln) + L-glutamine + ATP = L-glutaminyl-tRNA(Gln) + AMP + diphosphate. The protein is Glutamine--tRNA ligase of Escherichia coli (strain 55989 / EAEC).